The primary structure comprises 389 residues: Allantoicase (389 aa).

This sequence belongs to the allantoicase family.

The catalysed reaction is allantoate + H2O = (S)-ureidoglycolate + urea. Its pathway is nitrogen metabolism; (S)-allantoin degradation; (S)-ureidoglycolate from allantoate (aminidohydrolase route): step 1/1. In terms of biological role, utilization of purines as secondary nitrogen sources, when primary sources are limiting. The chain is Allantoicase (allc) from Xenopus tropicalis (Western clawed frog).